The following is a 639-amino-acid chain: 3D-(3,5/4)-trihydroxycyclohexane-1,2-dione hydrolase (639 aa).

Residue E62 participates in thiamine diphosphate binding. The tract at residues 438-518 (SLPGDLQRMW…INILLFDNCG (81 aa)) is thiamine pyrophosphate binding. The Mg(2+) site is built by D489 and N516.

Belongs to the TPP enzyme family. Requires Mg(2+) as cofactor. It depends on thiamine diphosphate as a cofactor.

The catalysed reaction is 3D-3,5/4-trihydroxycyclohexane-1,2-dione + H2O = 5-deoxy-D-glucuronate + H(+). The protein operates within polyol metabolism; myo-inositol degradation into acetyl-CoA; acetyl-CoA from myo-inositol: step 3/7. Its function is as follows. Involved in the cleavage of the C1-C2 bond of 3D-(3,5/4)-trihydroxycyclohexane-1,2-dione (THcHDO) to yield 5-deoxy-glucuronate (5DG). This Clostridium perfringens (strain ATCC 13124 / DSM 756 / JCM 1290 / NCIMB 6125 / NCTC 8237 / Type A) protein is 3D-(3,5/4)-trihydroxycyclohexane-1,2-dione hydrolase.